The sequence spans 497 residues: Cysteine--tRNA ligase (497 aa).

Cysteine 32 serves as a coordination point for Zn(2+). The short motif at 34–44 (PTVYGEGHLGH) is the 'HIGH' region element. Residues cysteine 228, histidine 253, and glutamate 257 each contribute to the Zn(2+) site. Positions 285 to 289 (KMGKS) match the 'KMSKS' region motif. Lysine 288 is an ATP binding site.

Belongs to the class-I aminoacyl-tRNA synthetase family. As to quaternary structure, monomer. Requires Zn(2+) as cofactor.

The protein resides in the cytoplasm. It carries out the reaction tRNA(Cys) + L-cysteine + ATP = L-cysteinyl-tRNA(Cys) + AMP + diphosphate. In Cytophaga hutchinsonii (strain ATCC 33406 / DSM 1761 / CIP 103989 / NBRC 15051 / NCIMB 9469 / D465), this protein is Cysteine--tRNA ligase.